We begin with the raw amino-acid sequence, 708 residues long: Lactotransferrin (708 aa).

The signal sequence occupies residues 1–19 (MKLFVPALLSLGALGLCLA). Transferrin-like domains lie at 25–352 (VRWC…NLRE) and 364–693 (VVWC…NLKK). Intrachain disulfides connect cysteine 28-cysteine 64 and cysteine 38-cysteine 55. Aspartate 79 provides a ligand contact to Fe(3+). Lysine 92 is an active-site residue. Position 111 (tyrosine 111) interacts with Fe(3+). Intrachain disulfides connect cysteine 134–cysteine 217, cysteine 176–cysteine 192, cysteine 179–cysteine 202, cysteine 189–cysteine 200, and cysteine 250–cysteine 264. Arginine 140, alanine 142, and glycine 143 together coordinate hydrogencarbonate. Tyrosine 211 is a binding site for Fe(3+). An N-linked (GlcNAc...) (high mannose) asparagine glycan is attached at asparagine 252. Position 272 (histidine 272) interacts with Fe(3+). Serine 278 acts as the Nucleophile in catalysis. Asparagine 300 is a glycosylation site (N-linked (GlcNAc...) asparagine). Cystine bridges form between cysteine 367–cysteine 399 and cysteine 377–cysteine 390. The N-linked (GlcNAc...) (complex) asparagine; alternate glycan is linked to asparagine 387. N-linked (GlcNAc...) (high mannose) asparagine; alternate glycosylation is present at asparagine 387. N-linked (GlcNAc...) (hybrid) asparagine; alternate glycosylation is present at asparagine 387. Residues aspartate 414 and tyrosine 452 each contribute to the Fe(3+) site. Intrachain disulfides connect cysteine 424–cysteine 703, cysteine 444–cysteine 666, cysteine 476–cysteine 551, cysteine 500–cysteine 694, cysteine 510–cysteine 524, cysteine 521–cysteine 534, cysteine 592–cysteine 606, and cysteine 644–cysteine 649. Hydrogencarbonate is bound by residues threonine 478, arginine 482, alanine 484, and glycine 485. A glycan (N-linked (GlcNAc...) (complex) asparagine; alternate) is linked at asparagine 495. Residue asparagine 495 is glycosylated (N-linked (GlcNAc...) (high mannose) asparagine; alternate). An N-linked (GlcNAc...) (hybrid) asparagine; alternate glycan is attached at asparagine 495. Tyrosine 545 lines the Fe(3+) pocket. N-linked (GlcNAc...) (high mannose) asparagine glycosylation is present at asparagine 564. Position 614 (histidine 614) interacts with Fe(3+).

The protein belongs to the transferrin family. As to quaternary structure, monomer. Found in a complex with LTF, CLU, EPPIN and SEMG1. Found in a complex with MPO and LTF; interacts directly with CP, allows Fe(3+) incorporation into LTF and activation of CP ferroxidase activity. Poly-N-acetyllactosaminic carbohydrate moiety seems to be needed for TLR4 activation.

The protein localises to the secreted. The protein resides in the cytoplasmic granule. Functionally, transferrins are iron binding transport proteins which can bind two Fe(3+) ions in association with the binding of an anion, usually bicarbonate. Its function is as follows. Major iron-binding and multifunctional protein found in exocrine fluids such as breast milk and mucosal secretions. Has antimicrobial activity, which depends on the extracellular cation concentration. Antimicrobial properties include bacteriostasis, which is related to its ability to sequester free iron and thus inhibit microbial growth, as well as direct bactericidal properties leading to the release of lipopolysaccharides from the bacterial outer membrane. Can also prevent bacterial biofilm development in P.aeruginosa infection. Has weak antifungal activity against C.albicans. Has anabolic, differentiating and anti-apoptotic effects on osteoblasts and can also inhibit osteoclastogenesis, possibly playing a role in the regulation of bone growth. Promotes binding of species C adenoviruses to epithelial cells, promoting adenovirus infection. Can inhibit papillomavirus infections. Stimulates the TLR4 signaling pathway leading to NF-kappa-B activation and subsequent pro-inflammatory cytokine production while also interfering with the lipopolysaccharide (LPS)-stimulated TLR4 signaling. Inhibits neutrophil granulocyte migration to sites of apoptosis, when secreted by apoptotic cells. Stimulates VEGFA-mediated endothelial cell migration and proliferation. Binds heparin, chondroitin sulfate and possibly other glycosaminoglycans (GAGs). Also binds specifically to pneumococcal surface protein A (PspA), the lipid A portion of bacterial lipopolysaccharide (LPS), lysozyme and DNA. Lactoferricin binds to the bacterial surface and is crucial for the bactericidal functions. Has some antiviral activity against papillomavirus infection. N-terminal region shows strong antifungal activity against C.albicans. Contains two BBXB heparin-binding consensus sequences that appear to form the predominate functional GAG-binding site. In terms of biological role, the lactotransferrin transferrin-like domain 1 functions as a serine protease of the peptidase S60 family that cuts arginine rich regions. This function contributes to the antimicrobial activity. Shows a preferential cleavage at -Arg-Ser-Arg-Arg-|- and -Arg-Arg-Ser-Arg-|-, and of Z-Phe-Arg-|-aminomethylcoumarin sites. The chain is Lactotransferrin (LTF) from Capra hircus (Goat).